The sequence spans 396 residues: MLDAQTIATVKATIPLLVETGPKLTAHFYDRMFTHNPELKEIFNMSNQRNGDQREALFNAIAAYASNIENLPALLPAVEKIAQKHTSFQIKPEQYNIVGEHLLATLDEMFSPGQEVLDAWGKAYGVLANVFINREAEIYNENASKAGGWEGTRDFRIVAKTPRSALITSFELEPVDGGAVAEYRPGQYLGVWLKPEGFPHQEIRQYSLTRKPDGKGYRIAVKREEGGQVSNWLHNHANVGDVVKLVAPAGDFFMAVADDTPVTLISTGVGQTPMLAMLDTLAKAGHTAQVNWFHAAENGEVHAFADEVKELGQSLPRFTAHTWYRQPSEADRAKGQFDSEGLMDLSKLEGAFSDPTMQFYLCGPVGFMQFTAKQLVDLGVKQENIHYECFGPHKVL.

Residues M1–A136 form the Globin domain. H85 lines the heme b pocket. Catalysis depends on charge relay system residues Y95 and E135. The segment at G147 to L396 is reductase. The region spanning E150–A255 is the FAD-binding FR-type domain. FAD is bound by residues Y188 and R204–S207. An NADP(+)-binding site is contributed by G268–P273. C389–P392 provides a ligand contact to FAD.

Belongs to the globin family. Two-domain flavohemoproteins subfamily. This sequence in the C-terminal section; belongs to the flavoprotein pyridine nucleotide cytochrome reductase family. The cofactor is heme b. FAD serves as cofactor.

It carries out the reaction 2 nitric oxide + NADPH + 2 O2 = 2 nitrate + NADP(+) + H(+). The enzyme catalyses 2 nitric oxide + NADH + 2 O2 = 2 nitrate + NAD(+) + H(+). In terms of biological role, is involved in NO detoxification in an aerobic process, termed nitric oxide dioxygenase (NOD) reaction that utilizes O(2) and NAD(P)H to convert NO to nitrate, which protects the bacterium from various noxious nitrogen compounds. Therefore, plays a central role in the inducible response to nitrosative stress. In Shigella flexneri, this protein is Flavohemoprotein.